The chain runs to 226 residues: Ribonuclease 3 (226 aa).

An RNase III domain is found at 7-129 (LPRLCRTLGY…IIGAVYLDAD (123 aa)). Residue Glu-42 participates in Mg(2+) binding. Asp-46 is an active-site residue. Residues Asp-115 and Glu-118 each coordinate Mg(2+). Glu-118 is an active-site residue. Positions 156–226 (DPKTILQEYL…AAQVLELLNK (71 aa)) constitute a DRBM domain.

The protein belongs to the ribonuclease III family. As to quaternary structure, homodimer. Mg(2+) is required as a cofactor.

Its subcellular location is the cytoplasm. It carries out the reaction Endonucleolytic cleavage to 5'-phosphomonoester.. In terms of biological role, digests double-stranded RNA. Involved in the processing of primary rRNA transcript to yield the immediate precursors to the large and small rRNAs (23S and 16S). Processes some mRNAs, and tRNAs when they are encoded in the rRNA operon. Processes pre-crRNA and tracrRNA of type II CRISPR loci if present in the organism. The polypeptide is Ribonuclease 3 (Shewanella frigidimarina (strain NCIMB 400)).